The primary structure comprises 379 residues: Alanine racemase (379 aa).

K41 functions as the Proton acceptor; specific for D-alanine in the catalytic mechanism. Position 41 is an N6-(pyridoxal phosphate)lysine (K41). R138 is a substrate binding site. Y260 functions as the Proton acceptor; specific for L-alanine in the catalytic mechanism. M319 contributes to the substrate binding site.

The protein belongs to the alanine racemase family. The cofactor is pyridoxal 5'-phosphate.

It catalyses the reaction L-alanine = D-alanine. The protein operates within amino-acid biosynthesis; D-alanine biosynthesis; D-alanine from L-alanine: step 1/1. In terms of biological role, catalyzes the interconversion of L-alanine and D-alanine. May also act on other amino acids. The protein is Alanine racemase (alr) of Rhizobium meliloti (strain 1021) (Ensifer meliloti).